The primary structure comprises 320 residues: Zona pellucida-binding protein 1 (320 aa).

Asn85 and Asn158 each carry an N-linked (GlcNAc...) asparagine glycan.

Belongs to the zona pellucida-binding protein Sp38 family.

The protein resides in the cytoplasmic vesicle. The protein localises to the secretory vesicle. Its subcellular location is the acrosome. It is found in the secreted. It localises to the acrosome membrane. In terms of biological role, plays a role in sperm morphogenesis and in sperm-oocyte interaction during fertilization. This Gallus gallus (Chicken) protein is Zona pellucida-binding protein 1 (ZPBP1).